The chain runs to 745 residues: Pheromone-processing carboxypeptidase KEX1 (745 aa).

Residues 1–47 (MSHFKYRNQTTDICNAAALDAFAMYSNYSVPLALLFALLLSFQTARA) form the signal peptide. Residues 48 to 655 (LKAADEYAVS…DDDHNSGSHL (608 aa)) lie on the Lumenal side of the membrane. Catalysis depends on residues Ser-214 and Asp-418. N-linked (GlcNAc...) asparagine glycosylation is found at Asn-471 and Asn-479. The active site involves His-482. Basic and acidic residues predominate over residues 515 to 526 (ITDDVNKGKDGD). The interval 515-651 (ITDDVNKGKD…AEDEDDDHNS (137 aa)) is disordered. A compositionally biased stretch (acidic residues) spans 527 to 537 (ASETDDTTELD). Residues 538 to 549 (CEGKDKLSEECK) show a composition bias toward basic and acidic residues. N-linked (GlcNAc...) asparagine glycosylation occurs at Asn-552. 2 stretches are compositionally biased toward acidic residues: residues 570–579 (NEEDDNDDTE) and 587–629 (DEKD…DDDK). The span at 630–640 (DGDKPEGKNND) shows a compositional bias: basic and acidic residues. The helical transmembrane segment at 656–676 (AVTMICLLVSGTIIGGLYFTF) threads the bilayer. Over 677-745 (RDRFRPRLRA…SRDSFELDNL (69 aa)) the chain is Cytoplasmic. Positions 709 to 745 (EQDAADLSNPENGAKKKGPYTSVPTQESRDSFELDNL) are disordered. The span at 735–745 (ESRDSFELDNL) shows a compositional bias: basic and acidic residues.

It belongs to the peptidase S10 family.

Its subcellular location is the golgi apparatus. The protein localises to the trans-Golgi network membrane. The catalysed reaction is Preferential release of a C-terminal arginine or lysine residue.. In terms of biological role, protease with a carboxypeptidase B-like function involved in the C-terminal processing of the lysine and arginine residues from protein precursors. Promotes cell fusion and is involved in the programmed cell death. In Lachancea thermotolerans (strain ATCC 56472 / CBS 6340 / NRRL Y-8284) (Yeast), this protein is Pheromone-processing carboxypeptidase KEX1 (KEX1).